Consider the following 1040-residue polypeptide: Multidrug resistance protein MdtB (1040 aa).

Transmembrane regions (helical) follow at residues 16 to 36 (FIMR…AGII), 347 to 367 (LMMA…NIPA), 369 to 389 (IIPG…MVFL), 396 to 416 (LTLM…IVVI), 440 to 460 (IGFT…PLLF), 472 to 492 (FAIT…TLTP), 537 to 557 (WLTL…WVFI), 863 to 883 (LGST…VLGI), 888 to 908 (FIHP…ALLA), 911 to 931 (IAGS…IGIV), 968 to 988 (ILMT…STGV), and 998 to 1018 (IGMV…TPVI).

This sequence belongs to the resistance-nodulation-cell division (RND) (TC 2.A.6) family. MdtB subfamily. In terms of assembly, part of a tripartite efflux system composed of MdtA, MdtB and MdtC. MdtB forms a heteromultimer with MdtC.

The protein resides in the cell inner membrane. In terms of biological role, the MdtABC tripartite complex confers resistance against novobiocin and deoxycholate. The polypeptide is Multidrug resistance protein MdtB (Escherichia coli O139:H28 (strain E24377A / ETEC)).